Consider the following 270-residue polypeptide: Phosphatidylglycerol--prolipoprotein diacylglyceryl transferase (270 aa).

Helical transmembrane passes span 10-30 (VAVA…LVGI), 56-76 (LIFW…VLFY), 92-112 (WKGG…AWWF), 120-140 (FFQL…AGRI), 175-195 (SQLY…NLYA), 202-222 (MAVS…VEFV), and 237-257 (VTMG…LIWL). Arg-139 serves as a coordination point for a 1,2-diacyl-sn-glycero-3-phospho-(1'-sn-glycerol).

This sequence belongs to the Lgt family.

The protein localises to the cell inner membrane. It carries out the reaction L-cysteinyl-[prolipoprotein] + a 1,2-diacyl-sn-glycero-3-phospho-(1'-sn-glycerol) = an S-1,2-diacyl-sn-glyceryl-L-cysteinyl-[prolipoprotein] + sn-glycerol 1-phosphate + H(+). It functions in the pathway protein modification; lipoprotein biosynthesis (diacylglyceryl transfer). Functionally, catalyzes the transfer of the diacylglyceryl group from phosphatidylglycerol to the sulfhydryl group of the N-terminal cysteine of a prolipoprotein, the first step in the formation of mature lipoproteins. The chain is Phosphatidylglycerol--prolipoprotein diacylglyceryl transferase from Pseudomonas savastanoi pv. phaseolicola (strain 1448A / Race 6) (Pseudomonas syringae pv. phaseolicola (strain 1448A / Race 6)).